The sequence spans 351 residues: UDP-N-acetylglucosamine--N-acetylmuramyl-(pentapeptide) pyrophosphoryl-undecaprenol N-acetylglucosamine transferase (351 aa).

UDP-N-acetyl-alpha-D-glucosamine-binding positions include 13–15, N125, R161, S189, I241, 260–265, and Q285; these read TGG and ALTVCE.

Belongs to the glycosyltransferase 28 family. MurG subfamily.

Its subcellular location is the cell inner membrane. The catalysed reaction is di-trans,octa-cis-undecaprenyl diphospho-N-acetyl-alpha-D-muramoyl-L-alanyl-D-glutamyl-meso-2,6-diaminopimeloyl-D-alanyl-D-alanine + UDP-N-acetyl-alpha-D-glucosamine = di-trans,octa-cis-undecaprenyl diphospho-[N-acetyl-alpha-D-glucosaminyl-(1-&gt;4)]-N-acetyl-alpha-D-muramoyl-L-alanyl-D-glutamyl-meso-2,6-diaminopimeloyl-D-alanyl-D-alanine + UDP + H(+). The protein operates within cell wall biogenesis; peptidoglycan biosynthesis. In terms of biological role, cell wall formation. Catalyzes the transfer of a GlcNAc subunit on undecaprenyl-pyrophosphoryl-MurNAc-pentapeptide (lipid intermediate I) to form undecaprenyl-pyrophosphoryl-MurNAc-(pentapeptide)GlcNAc (lipid intermediate II). The sequence is that of UDP-N-acetylglucosamine--N-acetylmuramyl-(pentapeptide) pyrophosphoryl-undecaprenol N-acetylglucosamine transferase from Haemophilus influenzae (strain PittGG).